The sequence spans 242 residues: Myogenic factor 6 (242 aa).

Positions 31-63 (SPLYPGSDGTLSPCQDQMPPEAGSDSSGEEHVL) are disordered. The region spanning 93–144 (DRRKAATLRERRRLKKINEAFEALKRRTVANPNQRLPKVEILRSAINYIERL) is the bHLH domain.

As to quaternary structure, efficient DNA binding requires dimerization with another bHLH protein. Interacts with CSRP3.

It localises to the nucleus. Its function is as follows. Involved in muscle differentiation (myogenic factor). Induces fibroblasts to differentiate into myoblasts. Probable sequence specific DNA-binding protein. The chain is Myogenic factor 6 (MYF6) from Bos taurus (Bovine).